We begin with the raw amino-acid sequence, 335 residues long: Olfactory receptor 10R2 (335 aa).

Topologically, residues 1 to 45 are extracellular; it reads MPQILIFTYLNMFYFFPPLQILAENLTMVTEFLLLGFSSLGEIQL. N25 carries N-linked (GlcNAc...) asparagine glycosylation. The chain crosses the membrane as a helical span at residues 46 to 66; the sequence is ALFVVFLFLYLVILSGNVTII. The Cytoplasmic segment spans residues 67-74; that stretch reads SVIHLDKS. Residues 75 to 95 form a helical membrane-spanning segment; the sequence is LHTPMYFFLGILSTSETFYTF. The Extracellular segment spans residues 96 to 119; that stretch reads VILPKMLINLLSVARTISFNCCAL. Residues C117 and C209 are joined by a disulfide bond. The chain crosses the membrane as a helical span at residues 120 to 140; the sequence is QMFFFLGFAITNCLLLGVMGY. Topologically, residues 141-159 are cytoplasmic; that stretch reads DRYAAICHPLHYPTLMSWQ. Residues 160–180 traverse the membrane as a helical segment; that stretch reads VCGKLAAACAIGGFLASLTVV. The Extracellular segment spans residues 181–217; the sequence is NLVFSLPFCSANKVNHYFCDISAVILLACTNTDVNEF. A helical membrane pass occupies residues 218 to 237; it reads VIFICGVLVLVVPFLFICVS. Topologically, residues 238 to 257 are cytoplasmic; it reads YLCILRTILKIPSAEGRRKA. Residues 258–278 form a helical membrane-spanning segment; the sequence is FSTCASHLSVVIVHYGCASFI. Over 279–291 the chain is Extracellular; it reads YLRPTANYVSNKD. Residues 292–312 form a helical membrane-spanning segment; that stretch reads RLVTVTYTIVTPLLNPMVYSL. Residues 313–335 lie on the Cytoplasmic side of the membrane; it reads RNKDVQLAIRKVLGKKGSLKLYN.

This sequence belongs to the G-protein coupled receptor 1 family.

It is found in the cell membrane. Functionally, odorant receptor. The protein is Olfactory receptor 10R2 (OR10R2) of Homo sapiens (Human).